The primary structure comprises 604 residues: Prostaglandin G/H synthase 2 (604 aa).

An N-terminal signal peptide occupies residues 1–17 (MLARALLLCAAVALSGA). The EGF-like domain maps to 18–55 (ANPCCSHPCQNRGVCMSVGFDQYKCDCTRTGFYGENCT). 4 cysteine pairs are disulfide-bonded: C21-C32, C22-C145, C26-C42, and C44-C54. The N-linked (GlcNAc...) asparagine glycan is linked to N53. Residue R106 participates in substrate binding. N130 carries N-linked (GlcNAc...) asparagine glycosylation. The active-site Proton acceptor is the H193. Y341 is a binding site for substrate. The active-site For cyclooxygenase activity is Y371. H374 provides a ligand contact to heme b. N-linked (GlcNAc...) asparagine glycosylation is present at N396. At C526 the chain carries S-nitrosocysteine. An intrachain disulfide couples C555 to C561. An O-acetylserine modification is found at S565. A glycan (N-linked (GlcNAc...) asparagine) is linked at N580.

The protein belongs to the prostaglandin G/H synthase family. In terms of assembly, homodimer. Heme b is required as a cofactor. S-nitrosylation by NOS2 (iNOS) activates enzyme activity. S-nitrosylation may take place on different Cys residues in addition to Cys-526. Post-translationally, acetylated at Ser-565 by SPHK1. During neuroinflammation, acetylation by SPHK1 promotes neuronal secretion of specialized preresolving mediators (SPMs), especially 15-R-lipoxin A4, which results in an increase of phagocytic microglia.

It is found in the microsome membrane. The protein localises to the endoplasmic reticulum membrane. It localises to the nucleus inner membrane. Its subcellular location is the nucleus outer membrane. The catalysed reaction is (5Z,8Z,11Z,14Z)-eicosatetraenoate + AH2 + 2 O2 = prostaglandin H2 + A + H2O. It carries out the reaction (5Z,8Z,11Z,14Z)-eicosatetraenoate + 2 O2 = prostaglandin G2. The enzyme catalyses prostaglandin G2 + AH2 = prostaglandin H2 + A + H2O. It catalyses the reaction (5Z,8Z,11Z,14Z,17Z)-eicosapentaenoate + 2 O2 = prostaglandin G3. The catalysed reaction is prostaglandin G3 + AH2 = prostaglandin H3 + A + H2O. It carries out the reaction (8Z,11Z,14Z)-eicosatrienoate + 2 O2 = prostaglandin G1. The enzyme catalyses prostaglandin G1 + AH2 = prostaglandin H1 + A + H2O. It catalyses the reaction 2-(5Z,8Z,11Z,14Z)-eicosatetraenoyl-sn-glycero-3-phosphoethanolamine + 2 O2 = 2-(prostaglandin G2)-sn-glycero-3-phosphoethanolamine. The catalysed reaction is 2-(prostaglandin G2)-sn-glycero-3-phosphoethanolamine + AH2 = 2-(prostaglandin H2)-sn-glycero-3-phosphoethanolamine + A + H2O. It carries out the reaction 2-(5Z,8Z,11Z,14Z)-eicosatetraenoyl-sn-glycero-3-phosphocholine + 2 O2 = 2-(prostaglandin G2)-sn-glycero-3-phosphocholine. The enzyme catalyses 2-(prostaglandin G2)-sn-glycero-3-phosphocholine + AH2 = 2-(prostaglandin H2)-sn-glycero-3-phosphocholine + A + H2O. It catalyses the reaction (15S)-hydroperoxy-(5Z,8Z,11Z,13E)-eicosatetraenoate + AH2 = (15S)-hydroxy-(5Z,8Z,11Z,13E)-eicosatetraenoate + A + H2O. The catalysed reaction is 2-(5Z,8Z,11Z,14Z)-eicosatetraenoyl-sn-glycero-3-phosphocholine + AH2 + O2 = 2-[(15S)-hydroxy-(5Z,8Z,11Z,13E)-eicosatetraenoyl]-sn-glycero-3-phosphocholine + A + H2O. It carries out the reaction 2-(5Z,8Z,11Z,14Z)-eicosatetraenoyl-sn-glycero-3-phosphocholine + AH2 + O2 = 2-[(15R)-hydroxy-(5Z,8Z,11Z,13E)-eicosatetraenoyl]-sn-glycero-3-phosphocholine + A + H2O. The enzyme catalyses 2-(5Z,8Z,11Z,14Z)-eicosatetraenoyl-sn-glycero-3-phosphocholine + AH2 + O2 = 2-[(11R)-hydroxy-(5Z,8Z,12E,14Z)-eicosatetraenoyl]-sn-glycero-3-phosphocholine + A + H2O. It catalyses the reaction (9Z,12Z)-octadecadienoate + AH2 + O2 = 9-hydroxy-(10E,12Z)-octadecadienoate + A + H2O. The catalysed reaction is (9Z,12Z)-octadecadienoate + AH2 + O2 = 13-hydroxy-(9Z,11E)-octadecadienoate + A + H2O. It carries out the reaction (5Z,8Z,11Z,14Z)-eicosatetraenoate + AH2 + O2 = (15R)-hydroxy-(5Z,8Z,11Z,13E)-eicosatetraenoate + A + H2O. The enzyme catalyses (5Z,8Z,11Z,14Z)-eicosatetraenoate + AH2 + O2 = (11R)-hydroxy-(5Z,8Z,12E,14Z)-eicosatetraenoate + A + H2O. It catalyses the reaction (5Z,8Z,11Z,14Z,17Z)-eicosapentaenoate + AH2 + O2 = (11R)-hydroxy-(5Z,8Z,12E,14Z,17Z)-eicosapentaenoate + A + H2O. The catalysed reaction is (5Z,8Z,11Z,14Z,17Z)-eicosapentaenoate + AH2 + O2 = (18S)-hydroxy-(5Z,8Z,11Z,14Z,16E)-eicosapentaenoate + A + H2O. It carries out the reaction (5Z,8Z,11Z,14Z,17Z)-eicosapentaenoate + AH2 + O2 = (18R)-hydroxy-(5Z,8Z,11Z,14Z,16E)-eicosapentaenoate + A + H2O. The enzyme catalyses (5Z,8Z,11Z,14Z,17Z)-eicosapentaenoate + AH2 + O2 = (15R)-hydroxy-(5Z,8Z,11Z,13E,17Z)-eicosapentaenoate + A + H2O. It catalyses the reaction (5Z,8Z,11Z,14Z,17Z)-eicosapentaenoate + AH2 + O2 = (15S)-hydroxy-(5Z,8Z,11Z,13E,17Z)-eicosapentaenoate + A + H2O. The catalysed reaction is (7Z,10Z,13Z,16Z,19Z)-docosapentaenoate + AH2 + O2 = 13R-hydroxy-(7Z,10Z,14E,16Z,19Z)-docosapentaenoate + A + H2O. It carries out the reaction (4Z,7Z,10Z,13Z,16Z,19Z)-docosahexaenoate + AH2 + O2 = 13-hydroxy-(4Z,7Z,10Z,14E,16Z,19Z)-docosahexaenoate + A + H2O. The enzyme catalyses (5S)-hydroxy-(6E,8Z,11Z,14Z)-eicosatetraenoate + AH2 + O2 = (5S,15R)-dihydroxy-(6E,8Z,11Z,13E)-eicosatetraenoate + A + H2O. It catalyses the reaction (4Z,7Z,10Z,13Z,16Z,19Z)-docosahexaenoate + AH2 + O2 = 17R-hydroxy-(4Z,7Z,10Z,13Z,15E,19Z)-docosahexaenoate + A + H2O. The catalysed reaction is (5S)-hydroxy-(6E,8Z,11Z,14Z)-eicosatetraenoate + AH2 + O2 = (5S,15S)-dihydroxy-(6E,8Z,11Z,13E)-eicosatetraenoate + A + H2O. It carries out the reaction (5S)-hydroxy-(6E,8Z,11Z,14Z)-eicosatetraenoate + AH2 + O2 = (5S,11R)-dihydroxy-(6E,8Z,12E,14Z)-eicosatetraenoate + A + H2O. The enzyme catalyses 2-(5Z,8Z,11Z,14Z-eicosatetraenoyl)-glycerol + 2 O2 = 2-glyceryl-prostaglandin G2. It catalyses the reaction 2-glyceryl-prostaglandin G2 + AH2 = 2-glyceryl-prostaglandin H2 + A + H2O. The catalysed reaction is (5Z,8Z,11Z,14Z)-eicosatetraenoate + O2 = (15R)-hydroperoxy-(5Z,8Z,11Z,13E)-eicosatetraenoate. It carries out the reaction (5Z,8Z,11Z,14Z)-eicosatetraenoate + O2 = 11R-hydroperoxy-(5Z,8Z,12E,14Z)-eicosatetraenoate. The enzyme catalyses (9Z,12Z)-octadecadienoate + AH2 + O2 = (9R)-hydroxy-(10E,12Z)-octadecadienoate + A + H2O. It catalyses the reaction (9Z,12Z)-octadecadienoate + AH2 + O2 = (9S)-hydroxy-(10E,12Z)-octadecadienoate + A + H2O. The catalysed reaction is (9Z,12Z)-octadecadienoate + AH2 + O2 = (13S)-hydroxy-(9Z,11E)-octadecadienoate + A + H2O. It carries out the reaction (9Z,12Z)-octadecadienoate + AH2 + O2 = (13R)-hydroxy-(9Z,11E)-octadecadienoate + A + H2O. It participates in lipid metabolism; prostaglandin biosynthesis. Its function is as follows. Dual cyclooxygenase and peroxidase in the biosynthesis pathway of prostanoids, a class of C20 oxylipins mainly derived from arachidonate ((5Z,8Z,11Z,14Z)-eicosatetraenoate, AA, C20:4(n-6)), with a particular role in the inflammatory response. The cyclooxygenase activity oxygenates AA to the hydroperoxy endoperoxide prostaglandin G2 (PGG2), and the peroxidase activity reduces PGG2 to the hydroxy endoperoxide prostaglandin H2 (PGH2), the precursor of all 2-series prostaglandins and thromboxanes. This complex transformation is initiated by abstraction of hydrogen at carbon 13 (with S-stereochemistry), followed by insertion of molecular O2 to form the endoperoxide bridge between carbon 9 and 11 that defines prostaglandins. The insertion of a second molecule of O2 (bis-oxygenase activity) yields a hydroperoxy group in PGG2 that is then reduced to PGH2 by two electrons. Similarly catalyzes successive cyclooxygenation and peroxidation of dihomo-gamma-linoleate (DGLA, C20:3(n-6)) and eicosapentaenoate (EPA, C20:5(n-3)) to corresponding PGH1 and PGH3, the precursors of 1- and 3-series prostaglandins. In an alternative pathway of prostanoid biosynthesis, converts 2-arachidonoyl lysophopholipids to prostanoid lysophopholipids, which are then hydrolyzed by intracellular phospholipases to release free prostanoids. Metabolizes 2-arachidonoyl glycerol yielding the glyceryl ester of PGH2, a process that can contribute to pain response. Generates lipid mediators from n-3 and n-6 polyunsaturated fatty acids (PUFAs) via a lipoxygenase-type mechanism. Oxygenates PUFAs to hydroperoxy compounds and then reduces them to corresponding alcohols. Plays a role in the generation of resolution phase interaction products (resolvins) during both sterile and infectious inflammation. Metabolizes docosahexaenoate (DHA, C22:6(n-3)) to 17R-HDHA, a precursor of the D-series resolvins (RvDs). As a component of the biosynthetic pathway of E-series resolvins (RvEs), converts eicosapentaenoate (EPA, C20:5(n-3)) primarily to 18S-HEPE that is further metabolized by ALOX5 and LTA4H to generate 18S-RvE1 and 18S-RvE2. In vascular endothelial cells, converts docosapentaenoate (DPA, C22:5(n-3)) to 13R-HDPA, a precursor for 13-series resolvins (RvTs) shown to activate macrophage phagocytosis during bacterial infection. In activated leukocytes, contributes to oxygenation of hydroxyeicosatetraenoates (HETE) to diHETES (5,15-diHETE and 5,11-diHETE). Can also use linoleate (LA, (9Z,12Z)-octadecadienoate, C18:2(n-6)) as substrate and produce hydroxyoctadecadienoates (HODEs) in a regio- and stereospecific manner, being (9R)-HODE ((9R)-hydroxy-(10E,12Z)-octadecadienoate) and (13S)-HODE ((13S)-hydroxy-(9Z,11E)-octadecadienoate) its major products. During neuroinflammation, plays a role in neuronal secretion of specialized preresolving mediators (SPMs) 15R-lipoxin A4 that regulates phagocytic microglia. The sequence is that of Prostaglandin G/H synthase 2 (PTGS2) from Bos taurus (Bovine).